The sequence spans 260 residues: Pectate lyase H (260 aa).

An N-terminal signal peptide occupies residues 1–17; the sequence is MFIKNGLLLSLATSVLA.

This sequence belongs to the polysaccharide lyase 3 family. It depends on Ca(2+) as a cofactor.

It is found in the secreted. It carries out the reaction Eliminative cleavage of (1-&gt;4)-alpha-D-galacturonan to give oligosaccharides with 4-deoxy-alpha-D-galact-4-enuronosyl groups at their non-reducing ends.. Its function is as follows. Pectinolytic enzyme consist of four classes of enzymes: pectin lyase, polygalacturonase, pectin methylesterase and rhamnogalacturonase. Among pectinolytic enzymes, pectin lyase is the most important in depolymerization of pectin, since it cleaves internal glycosidic bonds of highly methylated pectins. Favors pectate, the anion, over pectin, the methyl ester. This is Pectate lyase H (plyH) from Emericella nidulans (strain FGSC A4 / ATCC 38163 / CBS 112.46 / NRRL 194 / M139) (Aspergillus nidulans).